A 92-amino-acid chain; its full sequence is Ribonuclease P protein component 1 (92 aa).

This sequence belongs to the eukaryotic/archaeal RNase P protein component 1 family. In terms of assembly, consists of a catalytic RNA component and at least 4-5 protein subunits.

Its subcellular location is the cytoplasm. It catalyses the reaction Endonucleolytic cleavage of RNA, removing 5'-extranucleotides from tRNA precursor.. Functionally, part of ribonuclease P, a protein complex that generates mature tRNA molecules by cleaving their 5'-ends. This is Ribonuclease P protein component 1 from Desulfurococcus amylolyticus (strain DSM 18924 / JCM 16383 / VKM B-2413 / 1221n) (Desulfurococcus kamchatkensis).